We begin with the raw amino-acid sequence, 89 residues long: uncharacterized protein (89 aa).

It to Synechocystis PCC 6803 slr1025.

This is an uncharacterized protein from Ureaplasma parvum serovar 3 (strain ATCC 700970).